We begin with the raw amino-acid sequence, 207 residues long: NADH-ubiquinone oxidoreductase chain 6 (207 aa).

5 helical membrane-spanning segments follow: residues 15–35 (ILLD…ILVS), 40–60 (SILY…LIGI), 66–86 (LYIL…LSLF), 116–136 (LFIL…NNIY), and 184–204 (ILLI…IVLT).

The protein belongs to the complex I subunit 6 family.

It is found in the mitochondrion membrane. It carries out the reaction a ubiquinone + NADH + 5 H(+)(in) = a ubiquinol + NAD(+) + 4 H(+)(out). Core subunit of the mitochondrial membrane respiratory chain NADH dehydrogenase (Complex I) that is believed to belong to the minimal assembly required for catalysis. Complex I functions in the transfer of electrons from NADH to the respiratory chain. The immediate electron acceptor for the enzyme is believed to be ubiquinone. This Wickerhamomyces canadensis (Yeast) protein is NADH-ubiquinone oxidoreductase chain 6 (ND6).